Consider the following 840-residue polypeptide: Leucine--tRNA ligase (840 aa).

The 'HIGH' region signature appears at 44–55; the sequence is PYPSANGLHVGH. Residues 617–621 carry the 'KMSKS' region motif; it reads KMSKS. K620 lines the ATP pocket.

It belongs to the class-I aminoacyl-tRNA synthetase family.

Its subcellular location is the cytoplasm. It catalyses the reaction tRNA(Leu) + L-leucine + ATP = L-leucyl-tRNA(Leu) + AMP + diphosphate. The polypeptide is Leucine--tRNA ligase (Borreliella burgdorferi (strain ATCC 35210 / DSM 4680 / CIP 102532 / B31) (Borrelia burgdorferi)).